Consider the following 451-residue polypeptide: Adenylyltransferase and sulfurtransferase MOCS3 (451 aa).

Thr-60 carries the phosphothreonine modification. Residues Gly-99, Asp-120, 127-131 (SNFHR), Lys-144, and 188-189 (DN) each bind ATP. Positions 229 and 232 each coordinate Zn(2+). The Glycyl thioester intermediate; for adenylyltransferase activity role is filled by Cys-246. Zn(2+) contacts are provided by Cys-304 and Cys-307. The region spanning 353-449 (QQQPHLLIDV…WTHKVDPSFP (97 aa)) is the Rhodanese domain. Cys-408 serves as the catalytic Cysteine persulfide intermediate; for sulfurtransferase activity.

This sequence in the N-terminal section; belongs to the HesA/MoeB/ThiF family. UBA4 subfamily. Requires Zn(2+) as cofactor.

It localises to the cytoplasm. The protein resides in the cytosol. The enzyme catalyses [molybdopterin-synthase sulfur-carrier protein]-C-terminal Gly-Gly + ATP + H(+) = [molybdopterin-synthase sulfur-carrier protein]-C-terminal Gly-Gly-AMP + diphosphate. The catalysed reaction is [molybdopterin-synthase sulfur-carrier protein]-C-terminal Gly-Gly-AMP + S-sulfanyl-L-cysteinyl-[cysteine desulfurase] + AH2 = [molybdopterin-synthase sulfur-carrier protein]-C-terminal-Gly-aminoethanethioate + L-cysteinyl-[cysteine desulfurase] + A + AMP + 2 H(+). It functions in the pathway tRNA modification; 5-methoxycarbonylmethyl-2-thiouridine-tRNA biosynthesis. It participates in cofactor biosynthesis; molybdopterin biosynthesis. Functionally, plays a central role in 2-thiolation of mcm(5)S(2)U at tRNA wobble positions of cytosolic tRNA(Lys), tRNA(Glu) and tRNA(Gln). Also essential during biosynthesis of the molybdenum cofactor. Acts by mediating the C-terminal thiocarboxylation of sulfur carriers URM1 and MOCS2A. Its N-terminus first activates URM1 and MOCS2A as acyl-adenylates (-COAMP), then the persulfide sulfur on the catalytic cysteine is transferred to URM1 and MOCS2A to form thiocarboxylation (-COSH) of their C-terminus. The reaction probably involves hydrogen sulfide that is generated from the persulfide intermediate and that acts as a nucleophile towards URM1 and MOCS2A. Subsequently, a transient disulfide bond is formed. Does not use thiosulfate as sulfur donor; NFS1 probably acting as a sulfur donor for thiocarboxylation reactions. The chain is Adenylyltransferase and sulfurtransferase MOCS3 from Drosophila ananassae (Fruit fly).